Reading from the N-terminus, the 353-residue chain is UPF0283 membrane protein CKO_01392 (353 aa).

3 consecutive transmembrane segments (helical) span residues 70–90 (MVMG…VQWT), 99–119 (WVAL…VGSV), and 213–233 (ESTL…FIAW).

Belongs to the UPF0283 family.

It localises to the cell inner membrane. This is UPF0283 membrane protein CKO_01392 from Citrobacter koseri (strain ATCC BAA-895 / CDC 4225-83 / SGSC4696).